Consider the following 326-residue polypeptide: Beta-ketoacyl-[acyl-carrier-protein] synthase III (326 aa).

Active-site residues include Cys-112 and His-251. Positions 252-256 are ACP-binding; sequence QANSR. The active site involves Asn-281.

The protein belongs to the thiolase-like superfamily. FabH family. As to quaternary structure, homodimer.

Its subcellular location is the cytoplasm. It catalyses the reaction malonyl-[ACP] + acetyl-CoA + H(+) = 3-oxobutanoyl-[ACP] + CO2 + CoA. The protein operates within lipid metabolism; fatty acid biosynthesis. Its function is as follows. Catalyzes the condensation reaction of fatty acid synthesis by the addition to an acyl acceptor of two carbons from malonyl-ACP. Catalyzes the first condensation reaction which initiates fatty acid synthesis and may therefore play a role in governing the total rate of fatty acid production. Possesses both acetoacetyl-ACP synthase and acetyl transacylase activities. Its substrate specificity determines the biosynthesis of branched-chain and/or straight-chain of fatty acids. The polypeptide is Beta-ketoacyl-[acyl-carrier-protein] synthase III (Clostridium botulinum (strain 657 / Type Ba4)).